The following is a 444-amino-acid chain: Beta-D-glucosyl crocetin beta-1,6-glucosyltransferase (444 aa).

His-9 acts as the Proton acceptor in catalysis. An an anthocyanidin-binding site is contributed by His-9. Asp-108 functions as the Charge relay in the catalytic mechanism. UDP-alpha-D-glucose contacts are provided by Thr-130, Ala-319, Gln-321, His-336, Trp-339, Asn-340, Ser-341, Glu-344, Asp-360, and Gln-361.

It belongs to the UDP-glycosyltransferase family. In terms of tissue distribution, ubiquitous.

It carries out the reaction beta-D-glucosyl crocetin + UDP-alpha-D-glucose = beta-D-gentiobiosyl crocetin + UDP + H(+). The catalysed reaction is bis(beta-D-glucosyl) crocetin + UDP-alpha-D-glucose = beta-D-gentiobiosyl beta-D-glucosyl crocetin + UDP + H(+). It catalyses the reaction beta-D-gentiobiosyl beta-D-glucosyl crocetin + UDP-alpha-D-glucose = bis(beta-D-gentiobiosyl) crocetin + UDP + H(+). Functionally, glucosyltransferase catalyzing the beta 1-6 glucosylation of the sugar moiety of crocetin glucosyl esters to produce crocetin gentiobiosyl esters. Weak activity toward curcumin glucosides, but no activity with flavonoid glucosides, coumarin glucosides, 4-nitrophenyl glucoside or crocetin. Involved with UGT75L6 in sequential glycosylation of crocetin to crocin (bis(beta-D-gentiobiosyl) crocetin). The protein is Beta-D-glucosyl crocetin beta-1,6-glucosyltransferase (UGT94E5) of Gardenia jasminoides (Cape jasmine).